A 205-amino-acid polypeptide reads, in one-letter code: Outer-membrane lipoprotein LolB (205 aa).

The first 17 residues, 1–17, serve as a signal peptide directing secretion; sequence MFLRHCITFTLIALLAG. The N-palmitoyl cysteine moiety is linked to residue C18. C18 is lipidated: S-diacylglycerol cysteine.

Belongs to the LolB family. As to quaternary structure, monomer.

The protein resides in the cell outer membrane. Functionally, plays a critical role in the incorporation of lipoproteins in the outer membrane after they are released by the LolA protein. This Pseudomonas putida (strain W619) protein is Outer-membrane lipoprotein LolB.